Reading from the N-terminus, the 301-residue chain is uncharacterized protein (301 aa).

This sequence belongs to the asfivirus E301R family. In terms of assembly, interacts with host IRF3.

Plays a role in the inhibition of host innate immune system by acting as a negatively regulator of type I interferon production. Mechanistically, interacts with and prevents host IRF3 nuclear localization to inhibit its transcriptional activity. This is an uncharacterized protein from African swine fever virus (isolate Pig/Kenya/KEN-50/1950) (ASFV).